A 698-amino-acid chain; its full sequence is Probable metal-nicotianamine transporter YSL17 (698 aa).

Residues 1–36 (MAEEARGGQRVVVDDDREDASSVASSTERAFEGEPL) are disordered. The next 14 membrane-spanning stretches (helical) occupy residues 43–63 (VTARSAAVSGVLGAVVSVVAM), 67–87 (LTSGLLPSLGVPAGLLGFFLA), 114–134 (IAVVSCSTIAFSGGFGTYILG), 157–177 (IGRVIAFLFLVNFSGLFIIVP), 216–236 (VVTLFKSLGATVLWPIFQWFF), 277–297 (MITASMLAGSIVSWGILWPYI), 322–342 (VFVGVSMILADGLFTILSALV), 395–415 (WVAVASYAALAALSVVAVPLL), 424–444 (VAAAYVAAPVFAFCNAYGVGV), 463–483 (SWVGMDGGGVVAGLAACGIIV), 511–531 (VGQVAGTALGCVVNPAIFWVF), 567–587 (LPDHSVLLCKLFFAMALALSA), 607–627 (IGVAVAFFVPPRIPVGMAVGC), and 644–664 (LLLPAVASGLICGDGLGSLAS).

This sequence belongs to the YSL (TC 2.A.67.2) family. Expressed at low levels in roots.

The protein localises to the membrane. Its function is as follows. May be involved in the transport of nicotianamine-chelated metals. The protein is Probable metal-nicotianamine transporter YSL17 (YSL17) of Oryza sativa subsp. japonica (Rice).